The chain runs to 454 residues: tRNA modification GTPase MnmE (454 aa).

(6S)-5-formyl-5,6,7,8-tetrahydrofolate contacts are provided by R23, E80, and K120. Residues 216 to 377 (GMKVVIAGRP…LRDHLKQSMG (162 aa)) enclose the TrmE-type G domain. N226 is a K(+) binding site. GTP-binding positions include 226–231 (NAGKSS), 245–251 (TAIAGTT), 270–273 (DTAG), 335–338 (NKAD), and 358–360 (SAR). S230 contacts Mg(2+). Residues T245, I247, and T250 each contribute to the K(+) site. T251 serves as a coordination point for Mg(2+). K454 provides a ligand contact to (6S)-5-formyl-5,6,7,8-tetrahydrofolate.

It belongs to the TRAFAC class TrmE-Era-EngA-EngB-Septin-like GTPase superfamily. TrmE GTPase family. In terms of assembly, homodimer. Heterotetramer of two MnmE and two MnmG subunits. K(+) is required as a cofactor.

The protein localises to the cytoplasm. In terms of biological role, exhibits a very high intrinsic GTPase hydrolysis rate. Involved in the addition of a carboxymethylaminomethyl (cmnm) group at the wobble position (U34) of certain tRNAs, forming tRNA-cmnm(5)s(2)U34. The polypeptide is tRNA modification GTPase MnmE (Pectobacterium atrosepticum (strain SCRI 1043 / ATCC BAA-672) (Erwinia carotovora subsp. atroseptica)).